The primary structure comprises 217 residues: Cytochrome c biogenesis ATP-binding export protein CcmA (217 aa).

The ABC transporter domain occupies 16 to 214; sequence LVLEQLSCER…AHGQAEVTEG (199 aa). 48–55 is a binding site for ATP; sequence GANGAGKT.

Belongs to the ABC transporter superfamily. CcmA exporter (TC 3.A.1.107) family. The complex is composed of two ATP-binding proteins (CcmA) and two transmembrane proteins (CcmB).

It localises to the cell inner membrane. It carries out the reaction heme b(in) + ATP + H2O = heme b(out) + ADP + phosphate + H(+). In terms of biological role, part of the ABC transporter complex CcmAB involved in the biogenesis of c-type cytochromes; once thought to export heme, this seems not to be the case, but its exact role is uncertain. Responsible for energy coupling to the transport system. The sequence is that of Cytochrome c biogenesis ATP-binding export protein CcmA from Alcanivorax borkumensis (strain ATCC 700651 / DSM 11573 / NCIMB 13689 / SK2).